Consider the following 876-residue polypeptide: Leucine--tRNA ligase (876 aa).

The 'HIGH' region motif lies at 43–53; sequence PYPSGRIHMGH. The 'KMSKS' region motif lies at 630-634; the sequence is KMSKS. Residue Lys633 coordinates ATP.

This sequence belongs to the class-I aminoacyl-tRNA synthetase family.

Its subcellular location is the cytoplasm. The enzyme catalyses tRNA(Leu) + L-leucine + ATP = L-leucyl-tRNA(Leu) + AMP + diphosphate. The polypeptide is Leucine--tRNA ligase (Methylocella silvestris (strain DSM 15510 / CIP 108128 / LMG 27833 / NCIMB 13906 / BL2)).